Consider the following 294-residue polypeptide: Pyridoxal 5'-phosphate synthase subunit PdxS (294 aa).

Aspartate 24 contributes to the D-ribose 5-phosphate binding site. Catalysis depends on lysine 81, which acts as the Schiff-base intermediate with D-ribose 5-phosphate. Position 153 (glycine 153) interacts with D-ribose 5-phosphate. D-glyceraldehyde 3-phosphate is bound at residue arginine 165. Residues glycine 214 and 235–236 contribute to the D-ribose 5-phosphate site; that span reads GS.

It belongs to the PdxS/SNZ family. Homohexamer and homododecamer. In the presence of PdxT, forms a dodecamer of heterodimers.

The enzyme catalyses aldehydo-D-ribose 5-phosphate + D-glyceraldehyde 3-phosphate + L-glutamine = pyridoxal 5'-phosphate + L-glutamate + phosphate + 3 H2O + H(+). The protein operates within cofactor biosynthesis; pyridoxal 5'-phosphate biosynthesis. Catalyzes the formation of pyridoxal 5'-phosphate from ribose 5-phosphate (RBP), glyceraldehyde 3-phosphate (G3P) and ammonia. The ammonia is provided by the PdxT subunit. Can also use ribulose 5-phosphate and dihydroxyacetone phosphate as substrates, resulting from enzyme-catalyzed isomerization of RBP and G3P, respectively. This is Pyridoxal 5'-phosphate synthase subunit PdxS from Geobacillus kaustophilus (strain HTA426).